The chain runs to 217 residues: Adenylate kinase (217 aa).

An ATP-binding site is contributed by 10-15; the sequence is GAGKGT. Residues 30-59 form an NMP region; the sequence is STGDIFRSNIKNGTELGRKAKEYIDKGLLV. AMP-binding positions include T31, R36, 57-59, 85-88, and Q92; these read LLV and GFPR. The tract at residues 126-163 is LID; sequence GRRVCSKCGMSYHIVYNQPKVENICDSCNGELIQRDDD. R127 is a binding site for ATP. C130 and C133 together coordinate Zn(2+). Position 136 to 137 (136 to 137) interacts with ATP; the sequence is SY. Zn(2+) is bound by residues C150 and C153. The AMP site is built by R160 and R171. E199 contributes to the ATP binding site.

This sequence belongs to the adenylate kinase family. As to quaternary structure, monomer.

It localises to the cytoplasm. It catalyses the reaction AMP + ATP = 2 ADP. Its pathway is purine metabolism; AMP biosynthesis via salvage pathway; AMP from ADP: step 1/1. In terms of biological role, catalyzes the reversible transfer of the terminal phosphate group between ATP and AMP. Plays an important role in cellular energy homeostasis and in adenine nucleotide metabolism. The protein is Adenylate kinase of Acetivibrio thermocellus (strain ATCC 27405 / DSM 1237 / JCM 9322 / NBRC 103400 / NCIMB 10682 / NRRL B-4536 / VPI 7372) (Clostridium thermocellum).